Consider the following 344-residue polypeptide: tRNA N6-adenosine threonylcarbamoyltransferase (344 aa).

His-114 and His-118 together coordinate Fe cation. Substrate-binding positions include 136 to 140, Asp-170, Gly-183, Asp-187, and Asn-278; that span reads LVSGG. Asp-306 contributes to the Fe cation binding site.

Belongs to the KAE1 / TsaD family. Fe(2+) serves as cofactor.

The protein resides in the cytoplasm. The catalysed reaction is L-threonylcarbamoyladenylate + adenosine(37) in tRNA = N(6)-L-threonylcarbamoyladenosine(37) in tRNA + AMP + H(+). Required for the formation of a threonylcarbamoyl group on adenosine at position 37 (t(6)A37) in tRNAs that read codons beginning with adenine. Is involved in the transfer of the threonylcarbamoyl moiety of threonylcarbamoyl-AMP (TC-AMP) to the N6 group of A37, together with TsaE and TsaB. TsaD likely plays a direct catalytic role in this reaction. This chain is tRNA N6-adenosine threonylcarbamoyltransferase, found in Mycobacteroides abscessus (strain ATCC 19977 / DSM 44196 / CCUG 20993 / CIP 104536 / JCM 13569 / NCTC 13031 / TMC 1543 / L948) (Mycobacterium abscessus).